The following is a 214-amino-acid chain: MAIGLVGRKLGMTRVFTEDGASLPVTVIEVDPNRVTQVKTEERDGYRALQVTTGARKASRVTKPRAGHFAKAGVEAGRGLWEFRLDGDQGAEIETGAELKVDIFEAGQIVDVTGISKGKGFQGVIKRHNFSMQDATHGNSLSHRAPGSIGQNQTPGRVFKGKKMAGHMGNERCTVQNLEVVRVDVERNLLLIKGAVPGSTGGNVLVRPGVKAKG.

Positions 136 to 156 (THGNSLSHRAPGSIGQNQTPG) are disordered. Glutamine 153 is subject to N5-methylglutamine.

Belongs to the universal ribosomal protein uL3 family. Part of the 50S ribosomal subunit. Forms a cluster with proteins L14 and L19. Methylated by PrmB.

Functionally, one of the primary rRNA binding proteins, it binds directly near the 3'-end of the 23S rRNA, where it nucleates assembly of the 50S subunit. The polypeptide is Large ribosomal subunit protein uL3 (Thioalkalivibrio sulfidiphilus (strain HL-EbGR7)).